We begin with the raw amino-acid sequence, 338 residues long: Lipoate-protein ligase A (338 aa).

A BPL/LPL catalytic domain is found at 29–216 (PATQRVLFLW…AFFAHYGERV (188 aa)). ATP-binding positions include Arg-71, 76–79 (GAVF), and Lys-134. Lys-134 contacts (R)-lipoate.

It belongs to the LplA family. Monomer.

It is found in the cytoplasm. The catalysed reaction is L-lysyl-[lipoyl-carrier protein] + (R)-lipoate + ATP = N(6)-[(R)-lipoyl]-L-lysyl-[lipoyl-carrier protein] + AMP + diphosphate + H(+). The protein operates within protein modification; protein lipoylation via exogenous pathway; protein N(6)-(lipoyl)lysine from lipoate: step 1/2. It functions in the pathway protein modification; protein lipoylation via exogenous pathway; protein N(6)-(lipoyl)lysine from lipoate: step 2/2. Its function is as follows. Catalyzes both the ATP-dependent activation of exogenously supplied lipoate to lipoyl-AMP and the transfer of the activated lipoyl onto the lipoyl domains of lipoate-dependent enzymes. The chain is Lipoate-protein ligase A from Shigella boydii serotype 18 (strain CDC 3083-94 / BS512).